The primary structure comprises 178 residues: MSTPPLAASGMAPGPFAGPQAQQAAREVNTASLCRIGQETVQDIVYRTMEIFQLLRNMQLPNGVTYHTGTYQDRLTKLQDNLRQLSVLFRKLRLVYDKCNENCGGMDPIPVEQLIPYVEEDGSKNDDRAGPPRFASEERREIAEVNKKLKQKNQQLKQIMDQLRNLIWDINAMLAMRN.

The interval 1-22 is disordered; the sequence is MSTPPLAASGMAPGPFAGPQAQ. An N-acetylserine modification is found at S2. Residues 10 to 22 are compositionally biased toward low complexity; sequence GMAPGPFAGPQAQ. Coiled-coil stretches lie at residues 70-94 and 133-173; these read TYQDRLTKLQDNLRQLSVLFRKLRL and RFAS…INAM.

The protein belongs to the Mediator complex subunit 30 family. Component of the Mediator complex, which is composed of MED1, MED4, MED6, MED7, MED8, MED9, MED10, MED11, MED12, MED13, MED13L, MED14, MED15, MED16, MED17, MED18, MED19, MED20, MED21, MED22, MED23, MED24, MED25, MED26, MED27, MED29, MED30, MED31, CCNC, CDK8 and CDC2L6/CDK11. The MED12, MED13, CCNC and CDK8 subunits form a distinct module termed the CDK8 module. Mediator containing the CDK8 module is less active than Mediator lacking this module in supporting transcriptional activation. Individual preparations of the Mediator complex lacking one or more distinct subunits have been variously termed ARC, CRSP, DRIP, PC2, SMCC and TRAP. As to expression, expressed in brain, heart, kidney, liver, lung, pancreas, placenta and skeletal muscle.

The protein localises to the nucleus. Its function is as follows. Component of the Mediator complex, a coactivator involved in the regulated transcription of nearly all RNA polymerase II-dependent genes. Mediator functions as a bridge to convey information from gene-specific regulatory proteins to the basal RNA polymerase II transcription machinery. Mediator is recruited to promoters by direct interactions with regulatory proteins and serves as a scaffold for the assembly of a functional preinitiation complex with RNA polymerase II and the general transcription factors. The polypeptide is Mediator of RNA polymerase II transcription subunit 30 (MED30) (Homo sapiens (Human)).